A 110-amino-acid chain; its full sequence is uncharacterized protein (110 aa).

This is an uncharacterized protein from Sulfolobus islandicus rod-shaped virus 1 (SIRV-1).